A 407-amino-acid chain; its full sequence is Argininosuccinate synthase (407 aa).

ATP contacts are provided by residues 16 to 24 (AYSGGLDTS) and Ala-44. Positions 96 and 101 each coordinate L-citrulline. An ATP-binding site is contributed by Gly-126. Residues Thr-128, Asn-132, and Asp-133 each contribute to the L-aspartate site. Asn-132 is an L-citrulline binding site. Residues Arg-136, Ser-185, Ser-194, Glu-270, and Tyr-282 each coordinate L-citrulline.

This sequence belongs to the argininosuccinate synthase family. Type 1 subfamily. In terms of assembly, homotetramer.

The protein localises to the cytoplasm. It catalyses the reaction L-citrulline + L-aspartate + ATP = 2-(N(omega)-L-arginino)succinate + AMP + diphosphate + H(+). It functions in the pathway amino-acid biosynthesis; L-arginine biosynthesis; L-arginine from L-ornithine and carbamoyl phosphate: step 2/3. This Shewanella putrefaciens (strain CN-32 / ATCC BAA-453) protein is Argininosuccinate synthase.